Reading from the N-terminus, the 329-residue chain is GTP 3',8-cyclase (329 aa).

In terms of domain architecture, Radical SAM core spans 8-234 (AFARKFYYLR…QLRQRSDGPA (227 aa)). Arg-17 lines the GTP pocket. [4Fe-4S] cluster is bound by residues Cys-24 and Cys-28. Tyr-30 provides a ligand contact to S-adenosyl-L-methionine. [4Fe-4S] cluster is bound at residue Cys-31. Residue Arg-68 coordinates GTP. Residue Gly-72 coordinates S-adenosyl-L-methionine. GTP is bound at residue Thr-99. Ser-123 contacts S-adenosyl-L-methionine. A GTP-binding site is contributed by Lys-160. S-adenosyl-L-methionine is bound at residue Met-194. Positions 257 and 260 each coordinate [4Fe-4S] cluster. 262-264 (RLR) contributes to the GTP binding site. Cys-274 contributes to the [4Fe-4S] cluster binding site.

It belongs to the radical SAM superfamily. MoaA family. As to quaternary structure, monomer and homodimer. It depends on [4Fe-4S] cluster as a cofactor.

The catalysed reaction is GTP + AH2 + S-adenosyl-L-methionine = (8S)-3',8-cyclo-7,8-dihydroguanosine 5'-triphosphate + 5'-deoxyadenosine + L-methionine + A + H(+). It participates in cofactor biosynthesis; molybdopterin biosynthesis. Catalyzes the cyclization of GTP to (8S)-3',8-cyclo-7,8-dihydroguanosine 5'-triphosphate. The sequence is that of GTP 3',8-cyclase from Salmonella dublin (strain CT_02021853).